A 240-amino-acid chain; its full sequence is MATVKELKATARPAGGKGAARAERRAGRVPGVIYGDNKPPVTISVDDTELRARILAGRFLTTIFDVELDGQKHRVIPRDFHLDPVRDFPIHVDFLRLGEGALIRVSVPLHLKNAEGAPGVKRGGTVNIVTHTVELEAEAESIPQFIEADVSQLDIGSSLHLSDVVLPKGVKTLSREDLTLVTIVPPSGYAEELKAAAAGPAAGAAAPAAAPAAGAKAPAAGAKAPAAGAKAPAAPAAKKK.

Disordered stretches follow at residues 1–23 (MATV…ARAE) and 207–240 (PAAA…AKKK).

Belongs to the bacterial ribosomal protein bL25 family. CTC subfamily. Part of the 50S ribosomal subunit; part of the 5S rRNA/L5/L18/L25 subcomplex. Contacts the 5S rRNA. Binds to the 5S rRNA independently of L5 and L18.

Its function is as follows. This is one of the proteins that binds to the 5S RNA in the ribosome where it forms part of the central protuberance. This is Large ribosomal subunit protein bL25 from Rhodopseudomonas palustris (strain BisB18).